The following is a 973-amino-acid chain: ATP-dependent DNA helicase homolog RECG1, chloroplastic/mitochondrial (973 aa).

The tract at residues Met1–Asp208 is sufficient for chloroplastic and mitochondrial trgeting. The tract at residues Leu174 to Thr200 is disordered. Residues Asp536 to Ile725 enclose the Helicase ATP-binding domain. Gly549–Thr556 is an ATP binding site. Positions Asp655–Gln658 match the DEQQ box motif. Positions Gly746–Leu904 constitute a Helicase C-terminal domain.

The protein belongs to the helicase family. RecG subfamily. As to expression, expressed in most tissues, not seen in pollen, ovules or developing seeds.

It localises to the plastid. The protein resides in the chloroplast. The protein localises to the mitochondrion. The enzyme catalyses Couples ATP hydrolysis with the unwinding of duplex DNA by translocating in the 3'-5' direction.. The catalysed reaction is ATP + H2O = ADP + phosphate + H(+). In terms of biological role, plays a critical role in recombination and DNA repair. Helps process Holliday junction (HJ) intermediates to mature products by catalyzing branch migration. Has replication fork regression activity, unwinds stalled or blocked replication forks to make a HJ that can be resolved. Has a DNA unwinding activity characteristic of a DNA helicase with 3'-5' polarity. Plays a role in recombination surveillance and repair of double-stranded (ds)DNA breaks in the mitochondrion. May be able to dissociate D- and R-loops. Able to complement UV sensitivity of a recG deletion in E.coli. This chain is ATP-dependent DNA helicase homolog RECG1, chloroplastic/mitochondrial, found in Arabidopsis thaliana (Mouse-ear cress).